The chain runs to 930 residues: Nonribosomal peptide synthetase btyA (930 aa).

The adenylation (A) domain stretch occupies residues 31–440 (ESPHRLTYAE…RGRSKELICI (410 aa)). The Carrier domain occupies 570-647 (PAGNETETLL…VLARQLQDGH (78 aa)). At serine 607 the chain carries O-(pantetheine 4'-phosphoryl)serine. A thioesterase (TE) domain region spans residues 667-920 (PLWLIHPIGG…EDNVHKVYRV (254 aa)).

This sequence belongs to the NRP synthetase family.

It carries out the reaction 2 3-(4-hydroxyphenyl)pyruvate + H(+) = (2S)-2-(4-hydoxybenzyl)-3-(4-hydroxyphenyl)-2-furonol carboxylate + H2O. It participates in secondary metabolite biosynthesis. Its function is as follows. Nonribosomal peptide synthetase; part of the gene cluster that mediates the biosynthesis of butyrolactones, natural products that show a wide range of biological activities such as antitumor, antiparasitic or anti-inflammatory activity. The nonribosomal peptide synthetase btyA is responsible for the production of butyrolactone II, the core structure of butyrolactones. BtyA first activates 4-hydroxyphenylpyruvate (HPPA) through its A domain to AMP-HPPA. The HPPA unit is then loaded to the T domain and eventually transferred to the TE domain. Upon loading of another HPPA unit to the T domain, the TE domain promotes the enolate formation on the unit attached. Then aldol condensation establishes the carbon-carbon bond between the two units, followed by ester cyclization, and keto-enol tautomerization to yield the gamma-butyrolactone core. Hydrolysis, and finally esterification of the exposed carboxylic acid group yields butyrolactone II. Two additional enzymes, a prenyltransferase and an epoxidase, may be involved in the tailoring modifications of butyrolactone II to give butyrolactone III and butyrolactone I. This is Nonribosomal peptide synthetase btyA from Aspergillus terreus (strain NIH 2624 / FGSC A1156).